The following is a 359-amino-acid chain: MMKQIQVDLGERSYPIYIGQNLMNDSEALSRYLFKKRILIVTNETVAPLYLNQIQEVMVSFGEVESVILPDGEQFKDLTHLDAIFTALLQRNYGRDSVLVALGGGVIGDMTGFAAACYQRGIDFIQIPTTLLSQVDSSVGGKTAVNHPLGKNMIGAFYQPQLVLIDTQCLHTLPAREFAAGMAEVIKYGIMWDGEFFQWLENNVQALKRLETEALVYAISRCCEIKADVVSQDETEQGVRALLNLGHTFGHAIEAEMGYGNWLHGEAVAAGTVLAAQTARSLGLIDESIVCRIVQLLQAFDLPVSAPESMDFDSFIQHMRRDKKVLGGQIRLVLPTGIGQADVFSQVTESTLEQVICCA.

Residues 71 to 76 (DGEQFK), 105 to 109 (GVIGD), 129 to 130 (TT), Lys-142, Lys-151, and 169 to 172 (CLHT) contribute to the NAD(+) site. Positions 184, 247, and 264 each coordinate Zn(2+).

Belongs to the sugar phosphate cyclases superfamily. Dehydroquinate synthase family. Co(2+) serves as cofactor. It depends on Zn(2+) as a cofactor. The cofactor is NAD(+).

The protein localises to the cytoplasm. The enzyme catalyses 7-phospho-2-dehydro-3-deoxy-D-arabino-heptonate = 3-dehydroquinate + phosphate. Its pathway is metabolic intermediate biosynthesis; chorismate biosynthesis; chorismate from D-erythrose 4-phosphate and phosphoenolpyruvate: step 2/7. Functionally, catalyzes the conversion of 3-deoxy-D-arabino-heptulosonate 7-phosphate (DAHP) to dehydroquinate (DHQ). The sequence is that of 3-dehydroquinate synthase from Shewanella putrefaciens (strain CN-32 / ATCC BAA-453).